The sequence spans 1023 residues: Protein FAM13A (1023 aa).

The 189-residue stretch at 43 to 231 (VSLQELERQG…KILENYNTLF (189 aa)) folds into the Rho-GAP domain. Residues 269 to 290 (LERDMPKPPPKTKIPKSRSEGS) form a disordered region. Residue Ser-345 is modified to Phosphoserine. 2 disordered regions span residues 381-437 (VNNS…SGFN) and 459-562 (CAGE…EVPQ). Over residues 384–405 (SGGQSSEDSESGTLSASSATSA) the composition is skewed to low complexity. 2 stretches are compositionally biased toward basic and acidic residues: residues 412-427 (SKEQDEVRHGRDKGLI) and 509-524 (SDERKGNEKDGGHTQH). Positions 536-549 (PSLSDTKQQRNQDA) are enriched in polar residues. Phosphoserine is present on residues Ser-597 and Ser-617. Disordered stretches follow at residues 628–663 (QYLDDTEVPPSPPNSHSFMRRRSSSLGSYDDEQEDL) and 726–759 (ISEEDLTPRMRQRSNTLPKSFGSQLEKEDEKKQE). Residues 666–730 (AQLTRRIQSL…ESKLKISEED (65 aa)) are a coiled coil. Phosphoserine is present on Ser-727. Phosphothreonine is present on Thr-732. Positions 738–748 (RSNTLPKSFGS) are enriched in polar residues. Positions 750–759 (LEKEDEKKQE) are enriched in basic and acidic residues. The stretch at 946–978 (ASIPELLEHLQEMREEKKRIRKKLRDFEDNFFR) forms a coiled coil.

It belongs to the FAM13 family. Isoform 1 is widely expressed, with highest expression in skeletal muscle, thymus, brain and lung. Isoform 3 is less abundant than isoform 1 and predominantly expressed in kidney, pancreas, liver, lung and thymus.

The polypeptide is Protein FAM13A (FAM13A) (Homo sapiens (Human)).